Consider the following 50-residue polypeptide: Sperm protamine P1 (50 aa).

The protein belongs to the protamine P1 family. Cross-linked by interchain disulfide bonds around the DNA-helix. Testis.

The protein resides in the nucleus. Its subcellular location is the chromosome. Functionally, protamines substitute for histones in the chromatin of sperm during the haploid phase of spermatogenesis. They compact sperm DNA into a highly condensed, stable and inactive complex. The polypeptide is Sperm protamine P1 (PRM1) (Saguinus imperator (Emperor tamarin)).